We begin with the raw amino-acid sequence, 867 residues long: Leucine--tRNA ligase (867 aa).

The 'HIGH' region signature appears at 40–51 (PYPSGAGLHVGH). The short motif at 638–642 (KMSKS) is the 'KMSKS' region element. Lys-641 is an ATP binding site.

The protein belongs to the class-I aminoacyl-tRNA synthetase family.

The protein localises to the cytoplasm. It catalyses the reaction tRNA(Leu) + L-leucine + ATP = L-leucyl-tRNA(Leu) + AMP + diphosphate. This chain is Leucine--tRNA ligase, found in Leptospira biflexa serovar Patoc (strain Patoc 1 / Ames).